The sequence spans 274 residues: Acetyl-coenzyme A carboxylase carboxyl transferase subunit alpha (274 aa).

The 249-residue stretch at 2–250 folds into the CoA carboxyltransferase C-terminal domain; that stretch reads NKEFIKSIVV…KKEIMNAMNE (249 aa).

It belongs to the AccA family. As to quaternary structure, acetyl-CoA carboxylase is a heterohexamer composed of biotin carboxyl carrier protein (AccB), biotin carboxylase (AccC) and two subunits each of ACCase subunit alpha (AccA) and ACCase subunit beta (AccD).

Its subcellular location is the cytoplasm. It catalyses the reaction N(6)-carboxybiotinyl-L-lysyl-[protein] + acetyl-CoA = N(6)-biotinyl-L-lysyl-[protein] + malonyl-CoA. It functions in the pathway lipid metabolism; malonyl-CoA biosynthesis; malonyl-CoA from acetyl-CoA: step 1/1. Its function is as follows. Component of the acetyl coenzyme A carboxylase (ACC) complex. First, biotin carboxylase catalyzes the carboxylation of biotin on its carrier protein (BCCP) and then the CO(2) group is transferred by the carboxyltransferase to acetyl-CoA to form malonyl-CoA. The chain is Acetyl-coenzyme A carboxylase carboxyl transferase subunit alpha from Clostridium botulinum (strain Alaska E43 / Type E3).